We begin with the raw amino-acid sequence, 313 residues long: Urease accessory protein UreD (313 aa).

The segment at 1–30 (MTDLSFPGQAASPGEGAGQTPSGGSGHRFD) is disordered. Residues 15-26 (EGAGQTPSGGSG) show a composition bias toward gly residues.

The protein belongs to the UreD family. As to quaternary structure, ureD, UreF and UreG form a complex that acts as a GTP-hydrolysis-dependent molecular chaperone, activating the urease apoprotein by helping to assemble the nickel containing metallocenter of UreC. The UreE protein probably delivers the nickel.

Its subcellular location is the cytoplasm. In terms of biological role, required for maturation of urease via the functional incorporation of the urease nickel metallocenter. This Chromohalobacter salexigens (strain ATCC BAA-138 / DSM 3043 / CIP 106854 / NCIMB 13768 / 1H11) protein is Urease accessory protein UreD.